The primary structure comprises 471 residues: ATP synthase subunit beta (471 aa).

153–160 (GGAGVGKT) serves as a coordination point for ATP.

This sequence belongs to the ATPase alpha/beta chains family. In terms of assembly, F-type ATPases have 2 components, CF(1) - the catalytic core - and CF(0) - the membrane proton channel. CF(1) has five subunits: alpha(3), beta(3), gamma(1), delta(1), epsilon(1). CF(0) has three main subunits: a(1), b(2) and c(9-12). The alpha and beta chains form an alternating ring which encloses part of the gamma chain. CF(1) is attached to CF(0) by a central stalk formed by the gamma and epsilon chains, while a peripheral stalk is formed by the delta and b chains.

The protein resides in the cell inner membrane. It carries out the reaction ATP + H2O + 4 H(+)(in) = ADP + phosphate + 5 H(+)(out). Its function is as follows. Produces ATP from ADP in the presence of a proton gradient across the membrane. The catalytic sites are hosted primarily by the beta subunits. In Verminephrobacter eiseniae (strain EF01-2), this protein is ATP synthase subunit beta.